The chain runs to 263 residues: Glucosamine-6-phosphate deaminase (263 aa).

Catalysis depends on Asp-67, which acts as the Proton acceptor; for enolization step. Catalysis depends on Asn-136, which acts as the For ring-opening step. The active-site Proton acceptor; for ring-opening step is the His-138. Glu-143 (for ring-opening step) is an active-site residue.

The protein belongs to the glucosamine/galactosamine-6-phosphate isomerase family. NagB subfamily. Homohexamer.

The catalysed reaction is alpha-D-glucosamine 6-phosphate + H2O = beta-D-fructose 6-phosphate + NH4(+). The protein operates within amino-sugar metabolism; N-acetylneuraminate degradation; D-fructose 6-phosphate from N-acetylneuraminate: step 5/5. Functionally, catalyzes the reversible isomerization-deamination of glucosamine 6-phosphate (GlcN6P) to form fructose 6-phosphate (Fru6P) and ammonium ion. This chain is Glucosamine-6-phosphate deaminase, found in Shewanella halifaxensis (strain HAW-EB4).